Consider the following 215-residue polypeptide: Thiamine-phosphate synthase (215 aa).

4-amino-2-methyl-5-(diphosphooxymethyl)pyrimidine-binding positions include 40 to 44 (QLRIK) and N72. Mg(2+) contacts are provided by D73 and D92. S111 is a binding site for 4-amino-2-methyl-5-(diphosphooxymethyl)pyrimidine. 137–139 (TTT) serves as a coordination point for 2-[(2R,5Z)-2-carboxy-4-methylthiazol-5(2H)-ylidene]ethyl phosphate. K140 contributes to the 4-amino-2-methyl-5-(diphosphooxymethyl)pyrimidine binding site. 2-[(2R,5Z)-2-carboxy-4-methylthiazol-5(2H)-ylidene]ethyl phosphate-binding positions include G169 and 189–190 (VS).

The protein belongs to the thiamine-phosphate synthase family. Mg(2+) is required as a cofactor.

It catalyses the reaction 2-[(2R,5Z)-2-carboxy-4-methylthiazol-5(2H)-ylidene]ethyl phosphate + 4-amino-2-methyl-5-(diphosphooxymethyl)pyrimidine + 2 H(+) = thiamine phosphate + CO2 + diphosphate. It carries out the reaction 2-(2-carboxy-4-methylthiazol-5-yl)ethyl phosphate + 4-amino-2-methyl-5-(diphosphooxymethyl)pyrimidine + 2 H(+) = thiamine phosphate + CO2 + diphosphate. The enzyme catalyses 4-methyl-5-(2-phosphooxyethyl)-thiazole + 4-amino-2-methyl-5-(diphosphooxymethyl)pyrimidine + H(+) = thiamine phosphate + diphosphate. It functions in the pathway cofactor biosynthesis; thiamine diphosphate biosynthesis; thiamine phosphate from 4-amino-2-methyl-5-diphosphomethylpyrimidine and 4-methyl-5-(2-phosphoethyl)-thiazole: step 1/1. Condenses 4-methyl-5-(beta-hydroxyethyl)thiazole monophosphate (THZ-P) and 2-methyl-4-amino-5-hydroxymethyl pyrimidine pyrophosphate (HMP-PP) to form thiamine monophosphate (TMP). The protein is Thiamine-phosphate synthase of Proteus mirabilis (strain HI4320).